The primary structure comprises 302 residues: Coiled-coil domain-containing protein 2 (302 aa).

The N-terminal stretch at 1–22 (MKNFGLLVVCLSLATLVIPSDG) is a signal peptide. Residues 198-234 (FADAMEKKAEALENAAEAAAEYISDQSEEVDDLSEEV) are a coiled coil. Residues 221–257 (SDQSEEVDDLSEEVLDDDSDENDSTSSESEVEDSDVD) form a disordered region. Over residues 223–257 (QSEEVDDLSEEVLDDDSDENDSTSSESEVEDSDVD) the composition is skewed to acidic residues. Asn242 carries an N-linked (GlcNAc...) asparagine glycan.

In terms of tissue distribution, component of the acid-insoluble organic matrix of calcified layers of the shell (at protein level).

It is found in the secreted. The sequence is that of Coiled-coil domain-containing protein 2 from Lottia gigantea (Giant owl limpet).